A 370-amino-acid polypeptide reads, in one-letter code: Protein-glutamate methylesterase/protein-glutamine glutaminase 3 (370 aa).

Residues 3–119 (KVLIVDDSAL…SLNVSRIERE (117 aa)) form the Response regulatory domain. Aspartate 53 carries the post-translational modification 4-aspartylphosphate. The region spanning 166-360 (SLTEIGVVLI…GQLNAWMSRT (195 aa)) is the CheB-type methylesterase domain. Active-site residues include serine 178, histidine 205, and aspartate 302.

This sequence belongs to the CheB family. Phosphorylated by CheA. Phosphorylation of the N-terminal regulatory domain activates the methylesterase activity.

It localises to the cytoplasm. It carries out the reaction [protein]-L-glutamate 5-O-methyl ester + H2O = L-glutamyl-[protein] + methanol + H(+). It catalyses the reaction L-glutaminyl-[protein] + H2O = L-glutamyl-[protein] + NH4(+). Its function is as follows. Involved in chemotaxis. Part of a chemotaxis signal transduction system that modulates chemotaxis in response to various stimuli. Catalyzes the demethylation of specific methylglutamate residues introduced into the chemoreceptors (methyl-accepting chemotaxis proteins or MCP) by CheR. Also mediates the irreversible deamidation of specific glutamine residues to glutamic acid. This Rhodospirillum rubrum (strain ATCC 11170 / ATH 1.1.1 / DSM 467 / LMG 4362 / NCIMB 8255 / S1) protein is Protein-glutamate methylesterase/protein-glutamine glutaminase 3.